Consider the following 587-residue polypeptide: Probable phosphoribomutase (587 aa).

Substrate-binding positions include Thr49, Arg53, and 149–150 (SH). The Phosphoserine intermediate role is filled by Ser149. Mg(2+) is bound by residues Ser149, Asp306, Asp308, and Asp310. Ser149 carries the post-translational modification Phosphoserine. Substrate contacts are provided by residues 310-311 (DR), Thr380, 404-406 (EEA), and Lys418.

This sequence belongs to the phosphohexose mutase family. Mg(2+) is required as a cofactor.

It localises to the cytoplasm. Its subcellular location is the nucleus. The catalysed reaction is alpha-D-ribose 1-phosphate = D-ribose 5-phosphate. Its function is as follows. Converts ribose 1-phosphate to ribose 5-phosphate. Involved in ribose salvage via the pentose phosphate pathway. The polypeptide is Probable phosphoribomutase (Schizosaccharomyces pombe (strain 972 / ATCC 24843) (Fission yeast)).